The sequence spans 35 residues: Delta-theraphotoxin-Hm1a (35 aa).

Cystine bridges form between cysteine 2-cysteine 16, cysteine 9-cysteine 21, and cysteine 15-cysteine 28.

Belongs to the neurotoxin 10 (Hwtx-1) family. 09 (HaTx) subfamily. As to expression, expressed by the venom gland.

The protein localises to the secreted. Functionally, gating-modifier toxin that potently inhibits inactivation of the mammalian Nav1.1/SCN1A sodium channel (EC(50)=38 nM). Also moderately inhibits inactivation of Nav1.2/SCN2A (EC(50)=236 nM) and Nav1.3/SCN3A (EC(50)=220 nM) when the channels are expressed in oocytes without the beta-1 auxiliary subunit. Does not inhibit inactivation of Nav1.2/SCN2A when the channel is coexpressed with the beta-1 auxiliary subunit. When tested on Nav1.1/SCN1A channel, it enhances peak current amplitude and potently delays channel inactivation in a dose-dependent manner, leading to a large sustained current. It has no effect on the voltage-dependence of steady-state activation, and induces a depolarizing shift in the voltage dependence of inactivation. In addition, it does not modify the recovery from fast inactivation in Nav1.1/SCN1A. The binding affinity and subtype selectivity of the toxin towards Nav1.1/SCN1A channel is determined by residues within both the S1-S2 and S3-S4 loops of the domain IV voltage sensor of the channel. This toxin also weakly inhibits several subtypes of voltage-gated potassium channels. It moderately blocks Kv2.1/KCNB1 (23% inhibition at 100 nM), Kv2.2/KCNB2 (19.7% at 100 nM and 51% at 300 nM), Kv4.1/KCND1 (IC(50)=280 nM), Kv4.2/KCND2 (39% at 300 nM) and Kv4.3/KCND3 (43% at 300 nM). In vivo, intracerebroventricular injection into mice elicits convulsions, spasms, tremors and rapid death. When injected into mouse hindpaw, the toxin elicits an immediate and robust response to pain. However, intraplantar injection of toxin does not cause neurogenic inflammation or alter sensitivity to heat, indicative of a modality-specific effect on mechanosensitive neurons. In Dravet syndrome mice model, intracerebroventricular infusion of this peptide rescues mice from seizures and premature death. In Heteroscodra maculata (Togo starburst tarantula), this protein is Delta-theraphotoxin-Hm1a.